The primary structure comprises 702 residues: Cell adhesion molecule CEACAM5 (702 aa).

A signal peptide spans 1-34; sequence MESPSAPPHRWCIPWQRLLLTASLLTFWNPPTTA. Residues 35–144 form the Ig-like V-type domain; the sequence is KLTIESTPFN…TGQFRVYPEL (110 aa). N-linked (GlcNAc...) asparagine glycosylation is found at Asn104, Asn115, Asn152, Asn182, Asn197, Asn204, Asn208, Asn246, Asn256, Asn274, Asn288, Asn292, Asn309, Asn330, Asn351, Asn360, Asn375, Asn432, Asn466, Asn480, Asn508, Asn529, Asn553, Asn560, Asn580, Asn612, Asn650, and Asn665. Ig-like C2-type domains lie at 145-232, 240-315, 323-410, 418-495, 501-588, and 593-675; these read PKPS…VILN, PTIS…TVTT, PKPF…VILN, PTIS…KTIT, PKPS…VTLD, and PDTP…ITVS. A disulfide bridge links Cys167 with Cys215. A disulfide bond links Cys259 and Cys299. A disulfide bridge links Cys345 with Cys393. Cys437 and Cys477 are disulfide-bonded. Cys523 and Cys571 are oxidised to a cystine. Cys615 and Cys655 are joined by a disulfide. Ala685 carries GPI-anchor amidated alanine lipidation. A propeptide spans 686–702 (removed in mature form); it reads GATVGIMIGVLVGVALI.

Belongs to the immunoglobulin superfamily. CEA family. Homodimer. In terms of processing, complex immunoreactive glycoprotein with a MW of 180 kDa comprising 60% carbohydrate. In terms of tissue distribution, expressed in columnar epithelial and goblet cells of the colon (at protein level). Found in adenocarcinomas of endodermally derived digestive system epithelium and fetal colon.

The protein localises to the cell membrane. The protein resides in the apical cell membrane. It localises to the cell surface. In terms of biological role, cell surface glycoprotein that plays a role in cell adhesion, intracellular signaling and tumor progression. Mediates homophilic and heterophilic cell adhesion with other carcinoembryonic antigen-related cell adhesion molecules, such as CEACAM6. Plays a role as an oncogene by promoting tumor progression; induces resistance to anoikis of colorectal carcinoma cells. (Microbial infection) Receptor for E.coli Dr adhesins. Binding of E.coli Dr adhesins leads to dissociation of the homodimer. The chain is Cell adhesion molecule CEACAM5 from Homo sapiens (Human).